Here is a 296-residue protein sequence, read N- to C-terminus: Glycine N-acyltransferase (296 aa).

Lys16 is subject to N6-acetyllysine; alternate. Lys16 carries the post-translational modification N6-succinyllysine; alternate. Lys113 bears the N6-acetyllysine mark. N6-acetyllysine; alternate occurs at positions 127, 141, and 142. 3 positions are modified to N6-succinyllysine; alternate: Lys127, Lys141, and Lys142. 2 positions are modified to N6-acetyllysine: Lys159 and Lys167. The residue at position 169 (Lys169) is an N6-succinyllysine. N6-acetyllysine; alternate occurs at positions 183 and 256. N6-succinyllysine; alternate is present on residues Lys183 and Lys256. Lys267 is modified (N6-succinyllysine).

Belongs to the glycine N-acyltransferase family.

The protein resides in the mitochondrion. It carries out the reaction an acyl-CoA + glycine = an N-acylglycine + CoA + H(+). The enzyme catalyses benzoyl-CoA + glycine = N-benzoylglycine + CoA + H(+). Mitochondrial acyltransferase which transfers an acyl group to the N-terminus of glycine and glutamine, although much less efficiently. Can conjugate a multitude of substrates to form a variety of N-acylglycines, thereby detoxify xenobiotics, such as benzoic acid or salicylic acid, and endogenous organic acids, such as isovaleric acid. The protein is Glycine N-acyltransferase (Glyat) of Mus musculus (Mouse).